Consider the following 425-residue polypeptide: Protein PTI1 (425 aa).

At Ser-272 the chain carries Phosphoserine.

As to quaternary structure, component of the cleavage and polyadenylation factor (CPF) complex, which is composed of PTI1, SYC1, SSU72, GLC7, MPE1, REF2, PFS2, PTA1, YSH1/BRR5, SWD2, CFT2/YDH1, YTH1, CFT1/YHH1, FIP1 and PAP1. Component of the APT complex, which is a subcomplex of CPF, and is composed of PTI1, SYC1, SSU72, GLC7, REF2, PTA1 and SWD2.

It is found in the nucleus. In terms of biological role, component of the cleavage and polyadenylation factor (CPF) complex, which plays a key role in polyadenylation-dependent pre-mRNA 3'-end formation and cooperates with cleavage factors including the CFIA complex and NAB4/CFIB. Component of the APT complex, which may be involved in polyadenylation-independent transcript 3'-end formation. PTI1 is required for 3'-end formation of snoRNAs. The protein is Protein PTI1 (PTI1) of Saccharomyces cerevisiae (strain ATCC 204508 / S288c) (Baker's yeast).